Reading from the N-terminus, the 116-residue chain is Chaperone protein SicP (116 aa).

This sequence belongs to the SicP family.

It localises to the cytoplasm. Molecular chaperone required for SptP stabilization and secretion. In Salmonella paratyphi A (strain ATCC 9150 / SARB42), this protein is Chaperone protein SicP (sicP).